We begin with the raw amino-acid sequence, 212 residues long: Large ribosomal subunit protein bL25 (212 aa).

The segment at 190–212 (IAEAGDALAEPEVISKGSGEADE) is disordered.

Belongs to the bacterial ribosomal protein bL25 family. CTC subfamily. Part of the 50S ribosomal subunit; part of the 5S rRNA/L5/L18/L25 subcomplex. Contacts the 5S rRNA. Binds to the 5S rRNA independently of L5 and L18.

This is one of the proteins that binds to the 5S RNA in the ribosome where it forms part of the central protuberance. The polypeptide is Large ribosomal subunit protein bL25 (Rhodopirellula baltica (strain DSM 10527 / NCIMB 13988 / SH1)).